A 222-amino-acid chain; its full sequence is PKHD-type hydroxylase PCC8801_2196 (222 aa).

In terms of domain architecture, Fe2OG dioxygenase spans 78–175 (RIHSLLFSRY…RLVVVGWIES (98 aa)). Residues His96, Asp98, and His156 each coordinate Fe cation. A 2-oxoglutarate-binding site is contributed by Arg166.

The cofactor is Fe(2+). L-ascorbate serves as cofactor.

The protein is PKHD-type hydroxylase PCC8801_2196 of Rippkaea orientalis (strain PCC 8801 / RF-1) (Cyanothece sp. (strain PCC 8801)).